The sequence spans 459 residues: Cysteine--tRNA ligase (459 aa).

Cys29 serves as a coordination point for Zn(2+). A 'HIGH' region motif is present at residues 31–41; it reads PTVYDRAHIGN. Zn(2+)-binding residues include Cys209, His234, and Glu238. The short motif at 266–270 is the 'KMSKS' region element; it reads KMSKS. Residue Lys269 coordinates ATP.

Belongs to the class-I aminoacyl-tRNA synthetase family. In terms of assembly, monomer. It depends on Zn(2+) as a cofactor.

It is found in the cytoplasm. It catalyses the reaction tRNA(Cys) + L-cysteine + ATP = L-cysteinyl-tRNA(Cys) + AMP + diphosphate. This is Cysteine--tRNA ligase from Paramagnetospirillum magneticum (strain ATCC 700264 / AMB-1) (Magnetospirillum magneticum).